We begin with the raw amino-acid sequence, 472 residues long: Acyltransferase PapA3 (472 aa).

The protein belongs to the PapA acyltransferase family.

It carries out the reaction a long-chain fatty acyl-CoA + alpha,alpha-trehalose = a 2-O-(long-chain fatty acyl)-alpha,alpha-trehalose + CoA. The catalysed reaction is a mycolipenoyl-CoA + a 2-O-(long-chain fatty acyl)-alpha,alpha-trehalose = a 2-O-(long-chain fatty acyl)-3-O-mycolipenoyl-trehalose + CoA. It catalyses the reaction alpha,alpha-trehalose + hexadecanoyl-CoA = 2-O-hexadecanoyl-alpha,alpha-trehalose + CoA. The enzyme catalyses 2-O-hexadecanoyl-alpha,alpha-trehalose + hexadecanoyl-CoA = 2-O,3-O-dihexadecanoyl-alpha,alpha-trehalose + CoA. Functionally, involved in the biosynthesis of polyacyltrehalose (PAT), a pentaacylated, trehalose-based glycolipid that could have a role in anchoring the bacterial capsule. Catalyzes the sequential transfer of two palmitoyl groups onto a single glucose residue of trehalose generating the diacylated product 2,3-diacyltrehalose (trehalose dipalmitate). The sequence is that of Acyltransferase PapA3 (papA3) from Mycobacterium tuberculosis (strain CDC 1551 / Oshkosh).